Here is a 405-residue protein sequence, read N- to C-terminus: BRCA1-A complex subunit Abraxas 1 (405 aa).

An MPN domain is found at 7 to 153 (SALLSGFVFG…CSTYRLEHAL (147 aa)). Residues 208–262 (SLQEVHKINEMYATLQEELKKMCSDVEVSERSVEKLLTEVSQLKEEINRKKQHKI) adopt a coiled-coil conformation. The interval 365 to 405 (LHQDEEDCNQETKLALSSAETDEEALENPKDTNEYSYSPTF) is disordered. Residue Ser-402 is modified to Phosphoserine. Residues 402-405 (SPTF) carry the pSXXF motif motif.

It belongs to the FAM175 family. Abraxas subfamily. In terms of assembly, component of the BRCA1-A complex. Component of the BRISC complex. Homodimer. Interacts directly (when phosphorylated at Ser-402) with BRCA1. The phosphorylated homodimer can interact directly with two BRCA1 chains, giving rise to a heterotetramer. Post-translationally, phosphorylation of Ser-402 of the pSXXF motif by ATM or ATR constitutes a specific recognition motif for the BRCT domain of BRCA1.

The protein localises to the nucleus. Functionally, involved in DNA damage response and double-strand break (DSB) repair. Component of the BRCA1-A complex, acting as a central scaffold protein that assembles the various components of the complex and mediates the recruitment of BRCA1. The BRCA1-A complex specifically recognizes 'Lys-63'-linked ubiquitinated histones H2A and H2AX at DNA lesion sites, leading to target the BRCA1-BARD1 heterodimer to sites of DNA damage at DSBs. This complex also possesses deubiquitinase activity that specifically removes 'Lys-63'-linked ubiquitin on histones H2A and H2AX. This is BRCA1-A complex subunit Abraxas 1 from Gallus gallus (Chicken).